The following is a 384-amino-acid chain: Alcohol dehydrogenase class-3 (384 aa).

Zn(2+)-binding residues include cysteine 48, histidine 70, cysteine 100, cysteine 103, cysteine 106, cysteine 114, and cysteine 177.

The protein belongs to the zinc-containing alcohol dehydrogenase family. Class-III subfamily. Homodimer. The cofactor is Zn(2+).

The protein resides in the cytoplasm. It carries out the reaction a primary alcohol + NAD(+) = an aldehyde + NADH + H(+). The catalysed reaction is a secondary alcohol + NAD(+) = a ketone + NADH + H(+). The enzyme catalyses S-(hydroxymethyl)glutathione + NADP(+) = S-formylglutathione + NADPH + H(+). It catalyses the reaction S-(hydroxymethyl)glutathione + NAD(+) = S-formylglutathione + NADH + H(+). Its function is as follows. Class-III ADH is remarkably ineffective in oxidizing ethanol, but it readily catalyzes the oxidation of long-chain primary alcohols and the oxidation of S-(hydroxymethyl) glutathione. Plays a role in the calcium flux to the cytoplasm in the ASJ sensory neurons upon removal of a nitric oxide stimulus. This Caenorhabditis elegans protein is Alcohol dehydrogenase class-3.